We begin with the raw amino-acid sequence, 355 residues long: Ataxin-3 (355 aa).

Residue Met1 forms a Peptide (Met-Gly) (interchain with G-Cter in ubiquitin) linkage. The region spanning 1–180 is the Josephin domain; it reads MESIFHEKQE…DCEADQLLQM (180 aa). The active-site Nucleophile is the Cys14. His119 serves as the catalytic Proton acceptor. The active site involves Asn134. A Glycyl lysine isopeptide (Lys-Gly) (interchain with G-Cter in ubiquitin) cross-link involves residue Lys200. 2 consecutive UIM domains span residues 224-243 and 244-263; these read DDEDDLQRALAMSRQEIDME and DEEADLRRAIQLSMQGSSRG. The interval 257–333 is disordered; it reads MQGSSRGMCE…AGNAMSEEDV (77 aa). Residues Ser268, Ser272, and Ser273 each carry the phosphoserine modification. Residues 279-301 are compositionally biased toward basic and acidic residues; the sequence is EELRKRREAYFEKQQHQQQEADR. Residues 312-326 are compositionally biased toward polar residues; that stretch reads PTTSSGGLRSNQAGN. Residue Ser321 is modified to Phosphoserine. The 20-residue stretch at 329–348 folds into the UIM 3 domain; the sequence is SEEDVLRATVTVSLETAKDS.

In terms of assembly, interacts with STUB1/CHIP (when monoubiquitinated). Interacts with DNA repair proteins RAD23A and RAD23B. Interacts with BECN1 (via its poly-Gln domain). Interacts with PRKN, UBR2, VCP and tubulin. Monoubiquitinated by UBE2W, possibly leading to activate the deubiquitinating enzyme activity. Ubiquitously expressed.

It localises to the nucleus matrix. Its subcellular location is the nucleus. The protein resides in the lysosome membrane. The enzyme catalyses Thiol-dependent hydrolysis of ester, thioester, amide, peptide and isopeptide bonds formed by the C-terminal Gly of ubiquitin (a 76-residue protein attached to proteins as an intracellular targeting signal).. Deubiquitinating enzyme involved in protein homeostasis maintenance, transcription, cytoskeleton regulation, myogenesis and degradation of misfolded chaperone substrates. Binds long polyubiquitin chains and trims them, while it has weak or no activity against chains of 4 or less ubiquitins. Involved in degradation of misfolded chaperone substrates via its interaction with STUB1/CHIP: recruited to monoubiquitinated STUB1/CHIP, and restricts the length of ubiquitin chain attached to STUB1/CHIP substrates and preventing further chain extension. Interacts with key regulators of transcription and represses transcription: acts as a histone-binding protein that regulates transcription. Acts as a negative regulator of mTORC1 signaling in response to amino acid deprivation by mediating deubiquitination of RHEB, thereby promoting RHEB inactivation by the TSC-TBC complex. Regulates autophagy via the deubiquitination of 'Lys-402' of BECN1 leading to the stabilization of BECN1. The chain is Ataxin-3 (Atxn3) from Rattus norvegicus (Rat).